The primary structure comprises 159 residues: Cyclic pyranopterin monophosphate synthase (159 aa).

Substrate-binding positions include 76–78 (MCH) and 114–115 (ME). Asp129 is a catalytic residue.

Belongs to the MoaC family. In terms of assembly, homohexamer; trimer of dimers.

It carries out the reaction (8S)-3',8-cyclo-7,8-dihydroguanosine 5'-triphosphate = cyclic pyranopterin phosphate + diphosphate. Its pathway is cofactor biosynthesis; molybdopterin biosynthesis. Catalyzes the conversion of (8S)-3',8-cyclo-7,8-dihydroguanosine 5'-triphosphate to cyclic pyranopterin monophosphate (cPMP). The protein is Cyclic pyranopterin monophosphate synthase of Natranaerobius thermophilus (strain ATCC BAA-1301 / DSM 18059 / JW/NM-WN-LF).